The sequence spans 568 residues: Kinetochore protein NDC80 homolog (568 aa).

The disordered stretch occupies residues Met-1 to Asp-59. The span at Gln-28–Asp-39 shows a compositional bias: basic and acidic residues. Low complexity predominate over residues Ala-40–Ser-49. Coiled coils occupy residues Lys-241–Ala-334 and Ile-433–Asp-469.

It belongs to the NDC80/HEC1 family. As to quaternary structure, component of the NDC80 complex, which consists of NDC80, NUF2, SPC24 and SPC25.

Its subcellular location is the chromosome. The protein resides in the centromere. Its function is as follows. Acts as a component of the essential kinetochore-associated NDC80 complex, which is required for chromosome segregation and spindle checkpoint activity to ensure proper cell division. This Arabidopsis thaliana (Mouse-ear cress) protein is Kinetochore protein NDC80 homolog.